Reading from the N-terminus, the 162-residue chain is Phosphopantetheine adenylyltransferase (162 aa).

Threonine 9 is a binding site for substrate. Residues threonine 9–phenylalanine 10 and histidine 17 each bind ATP. Residues lysine 41, leucine 76, and arginine 90 each coordinate substrate. Residues glycine 91–arginine 93, glutamate 101, and histidine 126–arginine 132 each bind ATP.

It belongs to the bacterial CoaD family. As to quaternary structure, homohexamer. Mg(2+) serves as cofactor.

The protein localises to the cytoplasm. It catalyses the reaction (R)-4'-phosphopantetheine + ATP + H(+) = 3'-dephospho-CoA + diphosphate. It functions in the pathway cofactor biosynthesis; coenzyme A biosynthesis; CoA from (R)-pantothenate: step 4/5. Functionally, reversibly transfers an adenylyl group from ATP to 4'-phosphopantetheine, yielding dephospho-CoA (dPCoA) and pyrophosphate. The protein is Phosphopantetheine adenylyltransferase of Caulobacter sp. (strain K31).